The primary structure comprises 62 residues: MARKCFITGKKTKAGNNRSHAMNASKRTWGANLQKVRILVDGKPKKVYVSARALKSGKVERV.

Belongs to the bacterial ribosomal protein bL28 family.

The protein is Large ribosomal subunit protein bL28 of Bacillus velezensis (strain DSM 23117 / BGSC 10A6 / LMG 26770 / FZB42) (Bacillus amyloliquefaciens subsp. plantarum).